We begin with the raw amino-acid sequence, 487 residues long: Phosphatidylserine synthase 2 (487 aa).

Residues 1-10 are compositionally biased toward basic and acidic residues; sequence MRRGERRDAG. The disordered stretch occupies residues 1–50; it reads MRRGERRDAGGPRPESPVPAGRASLEEPPDGPSAGQATGPGEGRRSTESE. Residues 1 to 62 lie on the Cytoplasmic side of the membrane; the sequence is MRRGERRDAG…DDGTNTFFWR (62 aa). Phosphoserine occurs at positions 16 and 24. A helical transmembrane segment spans residues 63–83; sequence AHTLTVLFILTCTLGYVTLLE. Residues 84 to 96 are Lumenal-facing; that stretch reads ETPQDTAYNTKRG. The chain crosses the membrane as a helical span at residues 97–117; the sequence is IVASILVFLCFGVTQAKDGPF. Topologically, residues 118-126 are cytoplasmic; the sequence is SRPHPAYWR. Residues 127–147 traverse the membrane as a helical segment; the sequence is FWLCVSVVYELFLIFILFQTV. Residues 148–313 lie on the Lumenal side of the membrane; the sequence is QDGRQFLKYV…EWKPASSLRR (166 aa). The N-linked (GlcNAc...) asparagine glycan is linked to Asn-181. A helical transmembrane segment spans residues 314 to 334; it reads WLAVCGIILVFLLAELNTFYL. Lys-335 is a topological domain (cytoplasmic). A helical membrane pass occupies residues 336–356; that stretch reads FVLWMPPEHYLVLLRLVFFVN. At 357–376 the chain is on the lumenal side; it reads VGGVAMREIYDFMDDPKPHK. Residues 377–397 traverse the membrane as a helical segment; that stretch reads KLGPQAWLVAAITATELLIVV. Residues 398-403 lie on the Cytoplasmic side of the membrane; sequence KYDPHT. The helical transmembrane segment at 404 to 424 threads the bilayer; that stretch reads LTLSLPFYISQCWTLGSVLAL. At 425 to 487 the chain is on the lumenal side; that stretch reads TWTVWRFFLR…AEGEGAPTPN (63 aa). The tract at residues 451 to 487 is disordered; sequence KDDQGSTVGNGDQHPLGLDEDLLGPGVAEGEGAPTPN. Thr-485 is modified (phosphothreonine).

The protein belongs to the phosphatidyl serine synthase family.

The protein resides in the endoplasmic reticulum membrane. It carries out the reaction a 1,2-diacyl-sn-glycero-3-phosphoethanolamine + L-serine = a 1,2-diacyl-sn-glycero-3-phospho-L-serine + ethanolamine. The catalysed reaction is 1-hexadecanoyl-2-(9Z-octadecenoyl)-sn-glycero-3-phosphoethanolamine + L-serine = 1-hexadecanoyl-2-(9Z-octadecenoyl)-sn-glycero-3-phospho-L-serine + ethanolamine. The enzyme catalyses 1-hexadecanoyl-2-(4Z,7Z,10Z,13Z,16Z,19Z-docosahexaenoyl)-sn-glycero-3-phosphoethanolamine + L-serine = 1-hexadecanoyl-2-(4Z,7Z,10Z,13Z,16Z,19Z-docosahexaenoyl)-sn-glycero-3-phosphoserine + ethanolamine. It catalyses the reaction 1-octadecanoyl-2-(5Z,8Z,11Z,14Z)-eicosatetraenoyl-sn-glycero-3-phosphoethanolamine + L-serine = 1-octadecanoyl-2-(5Z,8Z,11Z,14Z)-eicosatetraenoyl-sn-glycero-3-phosphoserine + ethanolamine. It carries out the reaction 1-octadecanoyl-2-(4Z,7Z,10Z,13Z,16Z,19Z-docosahexaenoyl)-sn-glycero-3-phosphoethanolamine + L-serine = 1-octadecanoyl-2-(4Z,7Z,10Z,13Z,16Z,19Z-docosahexaenoyl)-sn-glycero-3-phosphoserine + ethanolamine. The catalysed reaction is 1-(1Z-octadecenyl)-2-(4Z,7Z,10Z,13Z,16Z,19Z-docosahexaenoyl)-sn-glycero-3-phosphoethanolamine + L-serine = 1-(1Z-octadecenyl)-2-(4Z,7Z,10Z,13Z,16Z,19Z-docosahexaenoyl)-sn-glycero-3-phospho-L-serine + ethanolamine. The enzyme catalyses 1-octadecanoyl-2-(9Z-octadecenoyl)-sn-glycero-3-phosphoethanolamine + L-serine = 1-octadecanoyl-2-(9Z-octadecenoyl)-sn-glycero-3-phospho-L-serine + ethanolamine. It catalyses the reaction 1-(1Z-octadecenyl)-2-(9Z-octadecenoyl)-sn-glycero-3-phosphoethanolamine + L-serine = 1-(1Z-octadecenyl)-2-(9Z-octadecenoyl)-sn-glycero-3-phospho-L-serine + ethanolamine. It carries out the reaction 1-(1Z-octadecenyl)-2-(5Z,8Z,11Z,14Z- eicosatetraenoyl)-sn-glycero-3-phosphoethanolamine + L-serine = 1-(1Z-octadecenyl)-2-(5Z,8Z,11Z,14Z-eicosatetraenoyl)-sn-glycero-3-phospho-L-serine + ethanolamine. It functions in the pathway phospholipid metabolism; phosphatidylserine biosynthesis. Its activity is regulated as follows. Requires calcium ions. Inhibited by exogenous phosphatidylserine. Functionally, catalyzes a base-exchange reaction in which the polar head group of phosphatidylethanolamine (PE) or phosphatidylcholine (PC) is replaced by L-serine. Catalyzes the conversion of phosphatatidylethanolamine and does not act on phosphatidylcholine. Can utilize both phosphatidylethanolamine (PE) plasmalogen and diacyl PE as substrate and the latter is six times better utilized, indicating the importance of an ester linkage at the sn-1 position. Although it shows no sn-1 fatty acyl preference, exhibits significant preference towards docosahexaenoic acid (22:6n-3) compared with 18:1 or 20:4 at the sn-2 position. The sequence is that of Phosphatidylserine synthase 2 (PTDSS2) from Homo sapiens (Human).